The following is a 341-amino-acid chain: Elongation factor G (341 aa).

Belongs to the GTP-binding elongation factor family. EF-G/EF-2 subfamily.

Its subcellular location is the cytoplasm. Functionally, catalyzes the GTP-dependent ribosomal translocation step during translation elongation. During this step, the ribosome changes from the pre-translocational (PRE) to the post-translocational (POST) state as the newly formed A-site-bound peptidyl-tRNA and P-site-bound deacylated tRNA move to the P and E sites, respectively. Catalyzes the coordinated movement of the two tRNA molecules, the mRNA and conformational changes in the ribosome. The polypeptide is Elongation factor G (fus) (Streptomyces ramocissimus).